A 483-amino-acid chain; its full sequence is Altronate oxidoreductase (483 aa).

Ile18–Ala29 contributes to the NAD(+) binding site.

This sequence belongs to the mannitol dehydrogenase family. UxaB subfamily.

The enzyme catalyses D-altronate + NAD(+) = keto-D-tagaturonate + NADH + H(+). The protein operates within carbohydrate metabolism; pentose and glucuronate interconversion. In Escherichia coli O157:H7, this protein is Altronate oxidoreductase (uxaB).